Here is a 282-residue protein sequence, read N- to C-terminus: 40S small subunit processome assembly factor 1 (282 aa).

2 disordered regions span residues 27 to 98 (YDLG…SEVP) and 121 to 143 (FHSR…NKTK). Basic and acidic residues predominate over residues 48–59 (KRDSETVADRAA). Phosphoserine occurs at positions 67 and 75. Positions 89–98 (SAPAAPSEVP) are enriched in low complexity. Residues 131-143 (KSEEDKPAKNKTK) show a composition bias toward basic and acidic residues. N6-acetyllysine is present on lysine 173. A compositionally biased stretch (basic and acidic residues) spans 208–226 (EKRTSMEEEKRAAQETDIF). The interval 208-254 (EKRTSMEEEKRAAQETDIFKRKKRKGRSQEDRRSKKLAPSILSSGRA) is disordered. The residue at position 268 (serine 268) is a Phosphoserine.

As to quaternary structure, part of the small subunit (SSU) processome, composed of more than 70 proteins and the RNA chaperone small nucleolar RNA (snoRNA) U3.

It is found in the chromosome. It localises to the nucleus. The protein localises to the nucleolus. Functionally, part of the small subunit (SSU) processome, first precursor of the small eukaryotic ribosomal subunit. During the assembly of the SSU processome in the nucleolus, many ribosome biogenesis factors, an RNA chaperone and ribosomal proteins associate with the nascent pre-rRNA and work in concert to generate RNA folding, modifications, rearrangements and cleavage as well as targeted degradation of pre-ribosomal RNA by the RNA exosome. Prevents helicase DHX37 to be recruited before post-A1 state. The chain is 40S small subunit processome assembly factor 1 from Rattus norvegicus (Rat).